A 103-amino-acid polypeptide reads, in one-letter code: Large ribosomal subunit protein uL24 (103 aa).

It belongs to the universal ribosomal protein uL24 family. In terms of assembly, part of the 50S ribosomal subunit.

One of two assembly initiator proteins, it binds directly to the 5'-end of the 23S rRNA, where it nucleates assembly of the 50S subunit. In terms of biological role, one of the proteins that surrounds the polypeptide exit tunnel on the outside of the subunit. The chain is Large ribosomal subunit protein uL24 from Haemophilus ducreyi (strain 35000HP / ATCC 700724).